A 242-amino-acid polypeptide reads, in one-letter code: Probable 2-phosphosulfolactate phosphatase (242 aa).

This sequence belongs to the ComB family. Mg(2+) serves as cofactor.

It carries out the reaction (2R)-O-phospho-3-sulfolactate + H2O = (2R)-3-sulfolactate + phosphate. The chain is Probable 2-phosphosulfolactate phosphatase from Prochlorococcus marinus (strain NATL1A).